The primary structure comprises 293 residues: Germ cell-specific gene 1-like protein 2 (293 aa).

Residues 1-8 are Cytoplasmic-facing; sequence MDRAKQQQ. The chain crosses the membrane as a helical span at residues 9 to 29; sequence ALLLLPVCLALTFSLTAVVSS. Residues 30 to 120 are Extracellular-facing; the sequence is HWCEGTRRVV…RSVVPAEEQG (91 aa). N-linked (GlcNAc...) asparagine glycosylation is found at Asn-59 and Asn-67. Residues 121–141 traverse the membrane as a helical segment; it reads VLWLSIGGEVLDIVLILTSAI. Residues 142 to 160 lie on the Cytoplasmic side of the membrane; sequence LLGSRVSCRSPGFHWLRVD. Residues 161–181 form a helical membrane-spanning segment; sequence ALVAIFMVLAGLLGMVAHMMY. Over 182 to 204 the chain is Extracellular; it reads TTIFQITVNLGPEDWKPQTWDYG. A helical transmembrane segment spans residues 205 to 225; the sequence is WSYCLAWGSFALCLAVSVSAM. The Cytoplasmic segment spans residues 226-293; the sequence is SRFTAARLEF…PGAPGKVSIC (68 aa).

This sequence belongs to the GSG1 family.

It localises to the membrane. The chain is Germ cell-specific gene 1-like protein 2 from Homo sapiens (Human).